We begin with the raw amino-acid sequence, 90 residues long: Conotoxin Vc22.1 (90 aa).

Positions 1-18 (MMTRVFLAMFFLLVLTKG) are cleaved as a signal peptide.

This sequence belongs to the E superfamily. Contains 4 disulfide bonds. In terms of tissue distribution, expressed by the venom duct.

The protein localises to the secreted. In Conus victoriae (Queen Victoria cone), this protein is Conotoxin Vc22.1.